Here is a 469-residue protein sequence, read N- to C-terminus: 3-isopropylmalate dehydratase large subunit (469 aa).

3 residues coordinate [4Fe-4S] cluster: cysteine 349, cysteine 410, and cysteine 413.

This sequence belongs to the aconitase/IPM isomerase family. LeuC type 1 subfamily. Heterodimer of LeuC and LeuD. [4Fe-4S] cluster serves as cofactor.

It catalyses the reaction (2R,3S)-3-isopropylmalate = (2S)-2-isopropylmalate. The protein operates within amino-acid biosynthesis; L-leucine biosynthesis; L-leucine from 3-methyl-2-oxobutanoate: step 2/4. Its function is as follows. Catalyzes the isomerization between 2-isopropylmalate and 3-isopropylmalate, via the formation of 2-isopropylmaleate. The polypeptide is 3-isopropylmalate dehydratase large subunit (Aromatoleum aromaticum (strain DSM 19018 / LMG 30748 / EbN1) (Azoarcus sp. (strain EbN1))).